A 460-amino-acid chain; its full sequence is Baeyer-Villiger oxidase AgnL3 (460 aa).

The protein belongs to the questin oxidase family. NADPH serves as cofactor.

It functions in the pathway secondary metabolite biosynthesis. Baeyer-Villiger oxidase; part of the gene cluster that mediates the biosynthesis of agnestins, dihydroxy-xanthone metabolites. The pathway begins with the assembly and cyclization of atrochrysone thioester by the non-reducing polyketide synthase Agnpks1. The atrochrysone carboxyl ACP thioesterase AgnL7 then breaks the thioester bond and releases the atrochrysone carboxylic acid as the first enzyme-free intermediate. The decarboxylase AgnL1 then catalyzes the concerted decarboxylation-elimination required to convert atochrysone carboxylic acid into emodin anthrone, which is further oxidized to emodin by the anthrone oxygenase AgnL2. Emodin then undergoes reduction catalyzed by the oxidoreductase AgnL4 to yield the dihydroquinone tautomer which is the substrate for reduction by the short chain dehydrogenase AgnL6 reduction to produce hydroxyketone, followed by AgnL8 dehydration and likely spontaneous autoxidation to chrysophanol. Baeyer-Villiger oxidation by the oxidase AgnL3 leads to monodictyphenone via cleavage of the C-10/C-10a bond of chrysophanol. Alternative cleavage at the C-4a/C-10 bond of chrysophanol also leads to the formation some cephalone F. Further conversion to agnestins A and B, requires reduction to dihydro-monodictyphenone, oxidation to agnestin C probably via an epoxide, and rearrangement to either agnestin A or agnestin B directly, although agnestin A or agnestin B can also interconvert. Within the cluster, AgnR1 is the only unassigned oxidoreductase present which could be involved in this conversion. However, AgnR1 seems not to be involved in this step, and thus genes involved in the proposed oxidation/reduction may be located elsewhere on the genome. Further agnestin A derivatives are probably formed by spontaneous decarboxylations, dehydrations and methanolysis reactions. The protein is Baeyer-Villiger oxidase AgnL3 of Paecilomyces divaricatus (Penicillium divaricatum).